The following is a 277-amino-acid chain: WRKY transcription factor 68 (277 aa).

The interval 51-96 (TPLMHFPTTPNSSSSEAVNGDDEEEEDGEEQQHKTKKRFKFTKMSR) is disordered. A compositionally biased stretch (polar residues) spans 58–67 (TTPNSSSSEA). Over residues 69 to 79 (NGDDEEEEDGE) the composition is skewed to acidic residues. Residues 84–96 (KTKKRFKFTKMSR) show a composition bias toward basic residues. Residues 112 to 177 (SEVLHLDDGY…YEGQHTHPRP (66 aa)) constitute a DNA-binding region (WRKY). The interval 183 to 206 (KEGSSPSNGSASRAHIGLPTLPPQ) is disordered.

It belongs to the WRKY group II-c family.

The protein resides in the nucleus. In terms of biological role, transcription factor. Interacts specifically with the W box (5'-(T)TGAC[CT]-3'), a frequently occurring elicitor-responsive cis-acting element. The sequence is that of WRKY transcription factor 68 (WRKY68) from Arabidopsis thaliana (Mouse-ear cress).